The sequence spans 363 residues: MKDNFSFAATSRNITSSLPFDNLNATGTNESAFNCSHKPADKHLEAIPVLYYMIFVIGFAVNIVVVSLFCCQKGPKKVSSIYIFNLAVADLLLLATLPLWATYYSYRYDWLFGPVMCKVFGSFLTLNMFASIFFITCMSVDRYQSVIYPFLSQRRNPWQASYVVPLVWCMACLSSLPTFYFRDVRTIEYLGVNACIMAFPPEKYAQWSAGIALMKNILGFIIPLIFIATCYFGIRKHLLKTNSYGKNRITRDQVLKMAAAVVLAFIICWLPFHVLTFLDALTWMGIINSCEVIAVIDLALPFAILLGFTNSCVNPFLYCFVGNRFQQKLRSVFRVPITWLQGKRETMSCRKSSSLREMDTFVS.

At 1 to 45 (MKDNFSFAATSRNITSSLPFDNLNATGTNESAFNCSHKPADKHLE) the chain is on the extracellular side. Asn-4, Asn-13, Asn-24, Asn-29, and Asn-34 each carry an N-linked (GlcNAc...) asparagine glycan. Intrachain disulfides connect Cys-35-Cys-290 and Cys-117-Cys-195. The helical transmembrane segment at 46 to 70 (AIPVLYYMIFVIGFAVNIVVVSLFC) threads the bilayer. Residues 71–80 (CQKGPKKVSS) lie on the Cytoplasmic side of the membrane. The helical transmembrane segment at 81-104 (IYIFNLAVADLLLLATLPLWATYY) threads the bilayer. Angiotensin II-binding residues include Tyr-103 and Tyr-104. At 105 to 114 (SYRYDWLFGP) the chain is on the extracellular side. Residues 115–140 (VMCKVFGSFLTLNMFASIFFITCMSV) traverse the membrane as a helical segment. Over 141–159 (DRYQSVIYPFLSQRRNPWQ) the chain is Cytoplasmic. The helical transmembrane segment at 160 to 181 (ASYVVPLVWCMACLSSLPTFYF) threads the bilayer. Arg-182, Tyr-204, and Lys-215 together coordinate angiotensin II. Over 182 to 206 (RDVRTIEYLGVNACIMAFPPEKYAQ) the chain is Extracellular. A helical membrane pass occupies residues 207-232 (WSAGIALMKNILGFIIPLIFIATCYF). The Cytoplasmic segment spans residues 233–257 (GIRKHLLKTNSYGKNRITRDQVLKM). Residues 258–281 (AAAVVLAFIICWLPFHVLTFLDAL) form a helical membrane-spanning segment. Asp-279 provides a ligand contact to angiotensin II. Topologically, residues 282–294 (TWMGIINSCEVIA) are extracellular. Residues 295-320 (VIDLALPFAILLGFTNSCVNPFLYCF) traverse the membrane as a helical segment. Asp-297 provides a ligand contact to angiotensin II. Residues 321–363 (VGNRFQQKLRSVFRVPITWLQGKRETMSCRKSSSLREMDTFVS) are Cytoplasmic-facing. The interval 324–333 (RFQQKLRSVF) is helix VIII. The residue at position 354 (Ser-354) is a Phosphoserine; by PKC.

Belongs to the G-protein coupled receptor 1 family. Interacts with MTUS1. In terms of tissue distribution, abundant expression in fetal tissues, immature brain, skin wound and atretic ovarian follicles.

It localises to the cell membrane. Its function is as follows. Receptor for angiotensin II, a vasoconstricting peptide. Signals primarily via a non-canonical G-protein- and beta-arrestin independent pathways. Cooperates with MTUS1 to inhibit ERK2 activation and cell proliferation. This chain is Type-2 angiotensin II receptor, found in Rattus norvegicus (Rat).